The chain runs to 106 residues: UPF0145 protein BF0270 (106 aa).

It belongs to the UPF0145 family.

This is UPF0145 protein BF0270 from Bacteroides fragilis (strain YCH46).